An 888-amino-acid polypeptide reads, in one-letter code: Inactive deaminase YJL070C (888 aa).

A disordered region spans residues 1 to 42; sequence MQAVERRPSLLFDEYQNSVTKPNETKNKEARVLSENDGDVSP. S9 is subject to Phosphoserine. Positions 23–34 are enriched in basic and acidic residues; that stretch reads NETKNKEARVLS. Phosphoserine is present on residues S41, S178, and S180.

This sequence belongs to the metallo-dependent hydrolases superfamily. Adenosine and AMP deaminases family.

The protein is Inactive deaminase YJL070C of Saccharomyces cerevisiae (strain ATCC 204508 / S288c) (Baker's yeast).